A 207-amino-acid polypeptide reads, in one-letter code: Thiamine-phosphate synthase (207 aa).

Residues 36–40 (QLRMK) and N68 each bind 4-amino-2-methyl-5-(diphosphooxymethyl)pyrimidine. Mg(2+) contacts are provided by D69 and D88. S106 is a binding site for 4-amino-2-methyl-5-(diphosphooxymethyl)pyrimidine. 132 to 134 (TNT) is a 2-[(2R,5Z)-2-carboxy-4-methylthiazol-5(2H)-ylidene]ethyl phosphate binding site. K135 is a 4-amino-2-methyl-5-(diphosphooxymethyl)pyrimidine binding site. 2-[(2R,5Z)-2-carboxy-4-methylthiazol-5(2H)-ylidene]ethyl phosphate-binding positions include G162 and 182 to 183 (VS).

The protein belongs to the thiamine-phosphate synthase family. Mg(2+) is required as a cofactor.

The catalysed reaction is 2-[(2R,5Z)-2-carboxy-4-methylthiazol-5(2H)-ylidene]ethyl phosphate + 4-amino-2-methyl-5-(diphosphooxymethyl)pyrimidine + 2 H(+) = thiamine phosphate + CO2 + diphosphate. It catalyses the reaction 2-(2-carboxy-4-methylthiazol-5-yl)ethyl phosphate + 4-amino-2-methyl-5-(diphosphooxymethyl)pyrimidine + 2 H(+) = thiamine phosphate + CO2 + diphosphate. It carries out the reaction 4-methyl-5-(2-phosphooxyethyl)-thiazole + 4-amino-2-methyl-5-(diphosphooxymethyl)pyrimidine + H(+) = thiamine phosphate + diphosphate. Its pathway is cofactor biosynthesis; thiamine diphosphate biosynthesis; thiamine phosphate from 4-amino-2-methyl-5-diphosphomethylpyrimidine and 4-methyl-5-(2-phosphoethyl)-thiazole: step 1/1. Condenses 4-methyl-5-(beta-hydroxyethyl)thiazole monophosphate (THZ-P) and 2-methyl-4-amino-5-hydroxymethyl pyrimidine pyrophosphate (HMP-PP) to form thiamine monophosphate (TMP). The polypeptide is Thiamine-phosphate synthase (Methanococcus maripaludis (strain DSM 14266 / JCM 13030 / NBRC 101832 / S2 / LL)).